The chain runs to 111 residues: Universal stress protein B (111 aa).

The next 2 membrane-spanning stretches (helical) occupy residues 1–21 and 90–110; these read MFST…NMMR and FILT…MLIW.

Belongs to the universal stress protein B family.

Its subcellular location is the cell inner membrane. This Photorhabdus laumondii subsp. laumondii (strain DSM 15139 / CIP 105565 / TT01) (Photorhabdus luminescens subsp. laumondii) protein is Universal stress protein B.